The following is a 550-amino-acid chain: CTP synthase (550 aa).

An amidoligase domain region spans residues 1–277 (MNGSADAGPR…GRAVERALGL (277 aa)). A CTP-binding site is contributed by Ser23. Ser23 is a binding site for UTP. 24–29 (SLGKGI) lines the ATP pocket. Tyr64 contributes to the L-glutamine binding site. Residue Asp81 coordinates ATP. Asp81 and Glu151 together coordinate Mg(2+). CTP is bound by residues 158 to 160 (DIE), 198 to 203 (KTKPTQ), and Lys234. Residues 198–203 (KTKPTQ) and Lys234 contribute to the UTP site. The region spanning 302 to 549 (KIAIAGKYVK…VEAALAYQER (248 aa)) is the Glutamine amidotransferase type-1 domain. Residue Gly364 participates in L-glutamine binding. The Nucleophile; for glutamine hydrolysis role is filled by Cys391. Residues 392-395 (LGLQ), Glu415, and Arg472 each bind L-glutamine. Active-site residues include His522 and Glu524.

Belongs to the CTP synthase family. In terms of assembly, homotetramer.

The enzyme catalyses UTP + L-glutamine + ATP + H2O = CTP + L-glutamate + ADP + phosphate + 2 H(+). It carries out the reaction L-glutamine + H2O = L-glutamate + NH4(+). It catalyses the reaction UTP + NH4(+) + ATP = CTP + ADP + phosphate + 2 H(+). It functions in the pathway pyrimidine metabolism; CTP biosynthesis via de novo pathway; CTP from UDP: step 2/2. Allosterically activated by GTP, when glutamine is the substrate; GTP has no effect on the reaction when ammonia is the substrate. The allosteric effector GTP functions by stabilizing the protein conformation that binds the tetrahedral intermediate(s) formed during glutamine hydrolysis. Inhibited by the product CTP, via allosteric rather than competitive inhibition. Functionally, catalyzes the ATP-dependent amination of UTP to CTP with either L-glutamine or ammonia as the source of nitrogen. Regulates intracellular CTP levels through interactions with the four ribonucleotide triphosphates. The polypeptide is CTP synthase (Thermus thermophilus (strain ATCC BAA-163 / DSM 7039 / HB27)).